A 240-amino-acid chain; its full sequence is Purine nucleoside phosphorylase RP494 (240 aa).

Positions 60, 96, and 113 each coordinate Zn(2+).

The protein belongs to the purine nucleoside phosphorylase YfiH/LACC1 family. As to quaternary structure, homodimer. Requires Cu(2+) as cofactor. Zn(2+) serves as cofactor.

The enzyme catalyses adenosine + phosphate = alpha-D-ribose 1-phosphate + adenine. It carries out the reaction S-methyl-5'-thioadenosine + phosphate = 5-(methylsulfanyl)-alpha-D-ribose 1-phosphate + adenine. It catalyses the reaction inosine + phosphate = alpha-D-ribose 1-phosphate + hypoxanthine. The catalysed reaction is adenosine + H2O + H(+) = inosine + NH4(+). Its function is as follows. Purine nucleoside enzyme that catalyzes the phosphorolysis of adenosine and inosine nucleosides, yielding D-ribose 1-phosphate and the respective free bases, adenine and hypoxanthine. Also catalyzes the phosphorolysis of S-methyl-5'-thioadenosine into adenine and S-methyl-5-thio-alpha-D-ribose 1-phosphate. Also has adenosine deaminase activity. The chain is Purine nucleoside phosphorylase RP494 from Rickettsia prowazekii (strain Madrid E).